A 325-amino-acid polypeptide reads, in one-letter code: MATH domain and coiled-coil domain-containing protein At3g58430 (325 aa).

In terms of domain architecture, MATH spans 6–131 (HKKFCWIIKN…KGDFKIIAEV (126 aa)). Positions 258-306 (FKVDWLEKKLDQVKDKKEREQSGLARLHELEEYLLKLKQKCSNLDLLVE) form a coiled coil.

This is MATH domain and coiled-coil domain-containing protein At3g58430 from Arabidopsis thaliana (Mouse-ear cress).